The chain runs to 348 residues: S-adenosylmethionine:tRNA ribosyltransferase-isomerase (348 aa).

The protein belongs to the QueA family. In terms of assembly, monomer.

Its subcellular location is the cytoplasm. The enzyme catalyses 7-aminomethyl-7-carbaguanosine(34) in tRNA + S-adenosyl-L-methionine = epoxyqueuosine(34) in tRNA + adenine + L-methionine + 2 H(+). The protein operates within tRNA modification; tRNA-queuosine biosynthesis. Functionally, transfers and isomerizes the ribose moiety from AdoMet to the 7-aminomethyl group of 7-deazaguanine (preQ1-tRNA) to give epoxyqueuosine (oQ-tRNA). The protein is S-adenosylmethionine:tRNA ribosyltransferase-isomerase of Amoebophilus asiaticus (strain 5a2).